The primary structure comprises 167 residues: Lipoprotein signal peptidase (167 aa).

Transmembrane regions (helical) follow at residues 8–28 (TFLTLLLLASIDWVSKLVVLL), 46–66 (WGHFSFLIIPSFNEGAAFGLF), 68–88 (QYKIPLLIFRVCVILGLALFL), and 101–121 (IALTLILAGALGNVGDILLHG). Catalysis depends on residues Asp125 and Asp143. A helical transmembrane segment spans residues 139-159 (FNLADAFISIGTLLLIGHLYF).

The protein belongs to the peptidase A8 family.

It is found in the cell inner membrane. The enzyme catalyses Release of signal peptides from bacterial membrane prolipoproteins. Hydrolyzes -Xaa-Yaa-Zaa-|-(S,diacylglyceryl)Cys-, in which Xaa is hydrophobic (preferably Leu), and Yaa (Ala or Ser) and Zaa (Gly or Ala) have small, neutral side chains.. The protein operates within protein modification; lipoprotein biosynthesis (signal peptide cleavage). This protein specifically catalyzes the removal of signal peptides from prolipoproteins. The chain is Lipoprotein signal peptidase from Chlamydia trachomatis serovar L2 (strain ATCC VR-902B / DSM 19102 / 434/Bu).